Here is a 358-residue protein sequence, read N- to C-terminus: Naringenin,2-oxoglutarate 3-dioxygenase (358 aa).

The Fe2OG dioxygenase domain maps to 190-294 (CVDMDQKIVV…RLSIATFQNP (105 aa)). Residues His217, Asp219, and His275 each contribute to the Fe cation site. Arg285 provides a ligand contact to 2-oxoglutarate.

The protein belongs to the iron/ascorbate-dependent oxidoreductase family. As to quaternary structure, interacts with Dihydroflavonol-4-reductase (TT3), chalcone synthase (TT4) and chalcone isomerase (TT5) to form a flavonoid enzyme complex. It depends on Fe(2+) as a cofactor. Requires L-ascorbate as cofactor.

The enzyme catalyses a (2S)-flavan-4-one + 2-oxoglutarate + O2 = a (2R,3R)-dihydroflavonol + succinate + CO2. Its pathway is secondary metabolite biosynthesis; flavonoid biosynthesis. Catalyzes the 3-beta-hydroxylation of 2S-flavanones to 2R,3R-dihydroflavonols which are intermediates in the biosynthesis of flavonols, anthocyanidins, catechins and proanthocyanidins in plants. This is Naringenin,2-oxoglutarate 3-dioxygenase (F3H) from Arabidopsis thaliana (Mouse-ear cress).